A 246-amino-acid polypeptide reads, in one-letter code: MGCFECCIKCLGGVPYASLLATILCFSGVALFCGCGHVALTKVERIVQLYFSNNASDHVLLTDVIQMMHYVIYGVASFSFLYGIILLAEGFYTTSAVKEIHGEFKTTVCGRCISGMSVFLTYLLGIAWLGVFGFSAVPAFIYYNMWSACQTISSPPVNLTTVIEEICVDVRQYGIIPWNASPGKACGSTLTTICNTSEFDLSYHLFIVACAGAGATVIALLIYMMATTYNFAVLKFKSREDCCTKF.

The next 4 helical transmembrane spans lie at 19 to 35 (LLATILCFSGVALFCGC), 71 to 87 (VIYGVASFSFLYGIILL), 118 to 134 (VFLTYLLGIAWLGVFGF), and 206 to 222 (FIVACAGAGATVIALLI).

Belongs to the myelin proteolipid protein family. In terms of tissue distribution, highly expressed in white matter in myelinating shark brain.

It localises to the membrane. The chain is Proteolipid protein DM gamma from Squalus acanthias (Spiny dogfish).